The primary structure comprises 597 residues: Protein Spindly (597 aa).

At M1 the chain carries N-acetylmethionine. Residues 1–445 are a coiled coil; that stretch reads MEADITNLRN…LKLKYEPEER (445 aa). Phosphoserine is present on residues S508 and S547. The tract at residues 531–597 is disordered; that stretch reads PASTEVLHEQ…STPEMQCPQQ (67 aa). Positions 540-549 are enriched in polar residues; it reads QSGNTPSSPR. The span at 550–574 shows a compositional bias: basic and acidic residues; sequence LTEESRLPTKVKERKEATSKLEKGA. Residues 583–597 show a composition bias toward polar residues; it reads YVSSKSTPEMQCPQQ.

It belongs to the Spindly family. Interacts with KNTC1 and ZW10. These interactions appear weak and may be transient or indirect. Interacts with dynein intermediate chain and dynactin (DCTN1). Interacts with the catalytically active form of USP45. Post-translationally, monoubiquitinated with'Lys-48' linkage. Deubiquitinated by USP45.

The protein resides in the cytoplasm. It localises to the cytoskeleton. It is found in the microtubule organizing center. The protein localises to the centrosome. Its subcellular location is the chromosome. The protein resides in the centromere. It localises to the kinetochore. It is found in the nucleus. The protein localises to the spindle pole. Its function is as follows. Required for the localization of dynein and dynactin to the mitotic kintochore. Dynein is believed to control the initial lateral interaction between the kinetochore and spindle microtubules and to facilitate the subsequent formation of end-on kinetochore-microtubule attachments mediated by the NDC80 complex. Also required for correct spindle orientation. Does not appear to be required for the removal of spindle assembly checkpoint (SAC) proteins from the kinetochore upon bipolar spindle attachment. Acts as an adapter protein linking the dynein motor complex to various cargos and converts dynein from a non-processive to a highly processive motor in the presence of dynactin. Facilitates the interaction between dynein and dynactin and activates dynein processivity (the ability to move along a microtubule for a long distance without falling off the track). Plays a role in cell migration. This chain is Protein Spindly (Spdl1), found in Rattus norvegicus (Rat).